A 94-amino-acid polypeptide reads, in one-letter code: Co-chaperonin GroES (94 aa).

It belongs to the GroES chaperonin family. As to quaternary structure, heptamer of 7 subunits arranged in a ring. Interacts with the chaperonin GroEL.

It localises to the cytoplasm. Together with the chaperonin GroEL, plays an essential role in assisting protein folding. The GroEL-GroES system forms a nano-cage that allows encapsulation of the non-native substrate proteins and provides a physical environment optimized to promote and accelerate protein folding. GroES binds to the apical surface of the GroEL ring, thereby capping the opening of the GroEL channel. The protein is Co-chaperonin GroES of Halothermothrix orenii (strain H 168 / OCM 544 / DSM 9562).